The chain runs to 359 residues: Serpentine receptor class epsilon-26 (359 aa).

7 consecutive transmembrane segments (helical) span residues 29-49 (CAIS…VFVS), 66-86 (IGVP…ITIL), 127-147 (VAGF…LAIV), 172-192 (FIII…FNIL), 195-215 (YVLN…YYYI), 256-276 (LVFV…ALVL), and 282-302 (FFMH…FLVV).

Belongs to the nematode receptor-like protein sre family.

Its subcellular location is the membrane. The polypeptide is Serpentine receptor class epsilon-26 (sre-26) (Caenorhabditis elegans).